The primary structure comprises 385 residues: G2/mitotic-specific cyclin-B3 (385 aa).

A compositionally biased stretch (polar residues) spans 1-16 (MMLRSQAKNVDLTSQA). Disordered stretches follow at residues 1-48 (MMLR…HSKG) and 63-88 (SAKR…QKSR). Composition is skewed to basic and acidic residues over residues 17 to 28 (DSRHQQKRKQAE) and 63 to 80 (SAKR…RDVE).

It belongs to the cyclin family. Cyclin AB subfamily.

It localises to the nucleus. Functionally, could be involved at the G2/M (mitosis) transition. Interacts with the CDK1 and CDK2 protein kinases. G2/M cyclins accumulate steadily during G2 and are abruptly destroyed at mitosis. Plays a role during oocyte meiosis II. The protein is G2/mitotic-specific cyclin-B3 (cyb-3) of Caenorhabditis elegans.